A 131-amino-acid polypeptide reads, in one-letter code: Global transcriptional regulator Spx (131 aa).

An intrachain disulfide couples Cys10 to Cys13.

The protein belongs to the ArsC family. Spx subfamily. In terms of assembly, interacts with the C-terminal domain of the alpha subunit of the RNAP.

The protein resides in the cytoplasm. Its function is as follows. Global transcriptional regulator that plays a key role in stress response and exerts either positive or negative regulation of genes. Acts by interacting with the C-terminal domain of the alpha subunit of the RNA polymerase (RNAP). This interaction can enhance binding of RNAP to the promoter region of target genes and stimulate their transcription, or block interaction of RNAP with activator. In Staphylococcus saprophyticus subsp. saprophyticus (strain ATCC 15305 / DSM 20229 / NCIMB 8711 / NCTC 7292 / S-41), this protein is Global transcriptional regulator Spx.